We begin with the raw amino-acid sequence, 418 residues long: MLHPRARTMLLLSLPAVAIGIASSLILIVVMKIASVLQNLLWQRLPGTLGIAQDSPLWIIGVLTLTGIAVGLVIRFSQGHAGPDPACEPLIGAPVPPSALPGLIVALILGLAGGVSLGPEHPIMTINIALAVAIGARLLPRVNRMEWTILASAGTIGALFGTPVAAALIFSQTLNGSSEVPLWDRLFAPLMAAAAGALTTGLFFHPHFSLPIAHYGQMEMTDILSGAIVAAIAIAAGMVAVWCLPRLHAMMNQMKNPVLVLGIGGFILGILGVIGGPVSLFKGLDEMQQMVANQAFSTSDYFLLAVIKLAALVVAAASGFRGGRIFPAVFVGVALGLMLHEHVPAVPAAITVSCAILGIVLVVTRDGWLSLFMAAVVVPNTTLLPLLCIVMLPAWLLLAGKPMMMVNRPKQQPPHDNV.

A run of 12 helical transmembrane segments spans residues 10–30 (LLLS…LIVV), 54–74 (DSPL…GLVI), 99–119 (ALPG…SLGP), 120–140 (EHPI…RLLP), 149–169 (ILAS…AALI), 186–206 (LFAP…FFHP), 223–243 (ILSG…AVWC), 258–278 (VLVL…GGPV), 300–320 (DYFL…ASGF), 322–342 (GGRI…LHEH), 343–363 (VPAV…VLVV), and 371–391 (LFMA…CIVM).

This sequence belongs to the chloride channel (TC 2.A.49) family.

The protein resides in the cell membrane. The sequence is that of Putative ion-transport protein YfeO from Shigella boydii serotype 4 (strain Sb227).